Consider the following 432-residue polypeptide: Glutamyl-tRNA reductase (432 aa).

Residues 49–52, Ser107, 112–114, and Gln118 contribute to the substrate site; these read TCNR and ETQ. Cys50 serves as the catalytic Nucleophile. Position 186–191 (186–191) interacts with NADP(+); the sequence is GAGEMG.

Belongs to the glutamyl-tRNA reductase family. Homodimer.

The enzyme catalyses (S)-4-amino-5-oxopentanoate + tRNA(Glu) + NADP(+) = L-glutamyl-tRNA(Glu) + NADPH + H(+). Its pathway is porphyrin-containing compound metabolism; protoporphyrin-IX biosynthesis; 5-aminolevulinate from L-glutamyl-tRNA(Glu): step 1/2. In terms of biological role, catalyzes the NADPH-dependent reduction of glutamyl-tRNA(Glu) to glutamate 1-semialdehyde (GSA). This Campylobacter jejuni subsp. jejuni serotype O:2 (strain ATCC 700819 / NCTC 11168) protein is Glutamyl-tRNA reductase.